The primary structure comprises 386 residues: MGQPTTTSLFMRDVMFHRMTGTSQAVNDVATLSGERREIIRRALNKKILVPNILELMPAWPSEFQPNIDEVNVEIDEWLKTVNVAKEKKLKHRARGNYTLLAGIYYPHCRKEKMLALSQFLYWIFFWDDEIDTGGELTEDREGTILCCAETNKCINDCLGPEPNYTPPPGSRGTVEMLYPILRDLRAGLSPVSTMRLKQELHDYVNGVKNQQKVRQEDHLPNPWDHFQMRVDDVGVIPSITQNEYAMDFTLPDWIRRHEAMEEIVLQCTKLTILLNEILSLQKEFRVSQLENLCLLFMNTYDMSIEQSIHKVLGLLKDHYKICIEAEARLPWSTTDEKLNNNIREYIRGCQRLATGTACWSYNCERYFKLSQLNDQQELLLDLSRT.

Mg(2+) is bound by residues aspartate 128, asparagine 276, and serine 280. A D(D/E)XX(D/E) motif motif is present at residues 128–132 (DDEID). Positions 276–284 (NEILSLQKE) match the NSE motif motif. The short motif at 360–367 (WSYNCERY) is the WxxxxxRY motif element. 2 residues coordinate (2E,6E)-farnesyl diphosphate: arginine 366 and tyrosine 367.

This sequence belongs to the terpene synthase family. Homodimer. Mg(2+) is required as a cofactor.

The enzyme catalyses (2E,6E)-farnesyl diphosphate + H2O = trichobrasilenol + diphosphate. It catalyses the reaction (2E,6E)-farnesyl diphosphate = alpha-humulene + diphosphate. The catalysed reaction is (2E,6E)-farnesyl diphosphate = (-)-(E)-beta-caryophyllene + diphosphate. It carries out the reaction (2E,6E)-farnesyl diphosphate = (E)-2-epi-beta-caryophyllene + diphosphate. The enzyme catalyses (2E,6E)-farnesyl diphosphate + H2O = (+)-isoafricanol + diphosphate. It catalyses the reaction (2E,6E)-farnesyl diphosphate + H2O = (+)-(2S,3R,9R)-pristinol + diphosphate. The catalysed reaction is (2E,6E)-farnesyl diphosphate = african-3-ene + diphosphate. It carries out the reaction (2E,6E)-farnesyl diphosphate = african-1-ene + diphosphate. It participates in sesquiterpene biosynthesis. Its function is as follows. Terpene cyclase that is able to convert FPP into a mixture of sesquiterpene hydrocarbons and alcohols. The main product is trichobrasilenol. Additionally, side products include alpha-humulene, caryophyllene, 2-epi-caryophyllene, african-3-ene, african-1-ene, isoafricanol and pristinol. Does not accept GPP, GGPP, and GFPP as substrates. This chain is Terpene cyclase 6, found in Hypocrea atroviridis (Trichoderma atroviride).